The following is a 371-amino-acid chain: Cuticle collagen 71 (371 aa).

A helical transmembrane segment spans residues G38–F60. Disordered stretches follow at residues A108–A127 and E153–R371. Residues P174 to P186 show a composition bias toward pro residues. Over residues P188 to P201 the composition is skewed to low complexity. The span at G202 to A222 shows a compositional bias: pro residues. Low complexity predominate over residues G223–P240. The Collagen-like domain occupies G223–A280. Over residues N246–R260 the composition is skewed to basic and acidic residues. Positions A314–N323 are enriched in low complexity. Basic and acidic residues predominate over residues H340–E349.

It belongs to the cuticular collagen family. Collagen polypeptide chains are complexed within the cuticle by disulfide bonds and other types of covalent cross-links.

Its subcellular location is the membrane. It is found in the nucleus. Its function is as follows. Probable cuticular collagen-like protein. Nematode cuticles are composed largely of collagen-like proteins. The cuticle functions both as an exoskeleton and as a barrier to protect the worm from its environment. Acts downstream of the Wnt signaling pathway, perhaps in the formation of the adult cuticle. The polypeptide is Cuticle collagen 71 (Caenorhabditis elegans).